The primary structure comprises 160 residues: SsrA-binding protein (160 aa).

The segment at 130–160 (LAKGKKKHDKRADQKEQDWQRQKQRLMKHKV) is disordered. Over residues 139–150 (KRADQKEQDWQR) the composition is skewed to basic and acidic residues. Over residues 151-160 (QKQRLMKHKV) the composition is skewed to basic residues.

This sequence belongs to the SmpB family.

It is found in the cytoplasm. In terms of biological role, required for rescue of stalled ribosomes mediated by trans-translation. Binds to transfer-messenger RNA (tmRNA), required for stable association of tmRNA with ribosomes. tmRNA and SmpB together mimic tRNA shape, replacing the anticodon stem-loop with SmpB. tmRNA is encoded by the ssrA gene; the 2 termini fold to resemble tRNA(Ala) and it encodes a 'tag peptide', a short internal open reading frame. During trans-translation Ala-aminoacylated tmRNA acts like a tRNA, entering the A-site of stalled ribosomes, displacing the stalled mRNA. The ribosome then switches to translate the ORF on the tmRNA; the nascent peptide is terminated with the 'tag peptide' encoded by the tmRNA and targeted for degradation. The ribosome is freed to recommence translation, which seems to be the essential function of trans-translation. This is SsrA-binding protein from Alkalilimnicola ehrlichii (strain ATCC BAA-1101 / DSM 17681 / MLHE-1).